The primary structure comprises 218 residues: 4-coumaroyl-homoserine lactone synthase (218 aa).

It belongs to the autoinducer synthase family.

It carries out the reaction 4-coumaroyl-CoA + S-adenosyl-L-methionine = N-(4-coumaroyl)-L-homoserine lactone + S-methyl-5'-thioadenosine + CoA + H(+). Functionally, catalyzes the synthesis of 4-coumaroyl-homoserine lactone, a quorum-sensing (QS) autoinducer molecule which binds to RpaR transcriptional regulator to regulate expression of QS-dependent genes. In Rhodopseudomonas palustris (strain ATCC BAA-98 / CGA009), this protein is 4-coumaroyl-homoserine lactone synthase.